Consider the following 654-residue polypeptide: Insulin receptor substrate 1 (654 aa).

The region spanning 3-107 is the PH domain; the sequence is DIKKCGYLRK…WYQAILEVQA (105 aa). Tyrosine 36 bears the Phosphotyrosine mark. The 105-residue stretch at 126 to 230 folds into the IRS-type PTB domain; it reads FREVWQVSVR…EAMKSLSEEF (105 aa). The segment at 228-329 is disordered; it reads EEFRPRTKSQ…EYGSSPGVLE (102 aa). Positions 235 to 245 are enriched in polar residues; it reads KSQSLSSTPIS. Serine 276 is modified (phosphoserine). Residues 307-321 are compositionally biased toward polar residues; it reads NESSADYGSASSDEY. Tyrosine 345 carries the phosphotyrosine; by INSR modification. Short sequence motifs (YXXM motif) lie at residues 345–348, 384–387, 398–401, 411–414, 430–433, and 466–469; these read YISM, YAMM, YMPM, YVMM, and YMNM. Residues tyrosine 398 and tyrosine 411 each carry the phosphotyrosine; by INSR modification. A Phosphotyrosine modification is found at tyrosine 430. Disordered stretches follow at residues 473–494 and 507–532; these read SRSA…GGPC and YKME…VNAG. Residues 514-524 show a composition bias toward low complexity; it reads SARASCSSSSD. Phosphotyrosine; by INSR is present on tyrosine 563.

In terms of assembly, interacts with the NPXY motif of tyrosine-phosphorylated igf1r and insr via the PTB domain. Binds to phosphatidylinositol 3-kinase p85 subunit via the phosphorylated YXXM motifs.

Functionally, may mediate the control of various cellular processes by insulin. When phosphorylated by the insulin receptor binds specifically to various cellular proteins containing SH2 domains such as phosphatidylinositol 3-kinase p85 subunit or grb2. Activates phosphatidylinositol 3-kinase when bound to the regulatory p85 subunit. The chain is Insulin receptor substrate 1 from Xenopus tropicalis (Western clawed frog).